Here is a 198-residue protein sequence, read N- to C-terminus: Recombination protein RecR (198 aa).

The C4-type zinc finger occupies cysteine 57–cysteine 72. Residues threonine 80 to alanine 175 form the Toprim domain.

Belongs to the RecR family.

Its function is as follows. May play a role in DNA repair. It seems to be involved in an RecBC-independent recombinational process of DNA repair. It may act with RecF and RecO. The chain is Recombination protein RecR from Lactococcus lactis subsp. cremoris (strain SK11).